The chain runs to 698 residues: UV radiation resistance-associated protein (698 aa).

Low complexity predominate over residues 1-10; that stretch reads MSSCASLGGP. Residues 1-21 form a disordered region; sequence MSSCASLGGPVPLPPPGPSAA. Positions 23-149 constitute a C2 domain; the sequence is TSGAPARALH…YLGQQIHARN (127 aa). The segment at 199–268 is sufficient for interaction with STX7; VTI1B AND STX8; it reads HRAQCAIKQT…REVAFLHKQQ (70 aa). The stretch at 200–304 forms a coiled coil; it reads RAQCAIKQTQ…LRKECTAKRE (105 aa). The interval 269–441 is sufficient for interaction with VPS16, required for interaction with CEP63; the sequence is MALQDKGSAF…IAQLRYQHGL (173 aa). The interval 442–698 is required for interaction with PRKDC, XRCC6 and XRCC5; the sequence is GTPDLRQTLP…FRRPRRSSDK (257 aa). Disordered regions lie at residues 477 to 551 and 565 to 586; these read PKRQ…SSLD and VDLGSSVSGDHGNSDSGQEQGE. S492 carries the post-translational modification Phosphoserine. A Phosphoserine; by MTOR modification is found at S497. Residue S507 is modified to Phosphoserine. A Phosphothreonine modification is found at T517. Phosphoserine is present on residues S521, S548, S549, S570, and S688.

As to quaternary structure, component of the PI3K (PI3KC3/PI3K-III/class III phosphatidylinositol 3-kinase) complex II (PI3KC3-C2) in which the core composed of the catalytic subunit PIK3C3, the regulatory subunit PIK3R4 and BECN1 is associated with UVRAG; in the complex interacts directly with BECN1. PI3KC3-C2 can associate with further regulatory subunits such as RUBCN and probably SH3GLB1/Bif-1. Interacts with SH3GLB1; UVRAG bridges the interaction to BECN1 indicative for an association with the PI3K complex PI3KC3-C2. Interacts with RINT1. Associates with the NRZ complex under basal conditions and dissociates from it under autophagy conditions to associate with the PI3K complex; these complex associations seem to be mutually exclusive. Interacts with VPS16; VPS11; VPS18; VPS33 (VPS33A or VPS33B) and VPS39; indicative for an association with a class C Vps tethering complex (possibly the HOPS complex). Interacts with RAB7A; RAB7A competes with UVRAG for RUBCN binding. Interacts with STX7, VTI1B, STX8. Interacts with PRKDC, XRCC6 and XRCC5; indicative for an association with the DNA-dependent protein kinase complex DNA-PK. Interacts with CEP63. Directly interacts with FEZ1 and SCOC; the interaction with SCOC is reduced by amino acid starvation, but the complex is stabilized in the presence of FEZ1. Interacts with BECN1P1/BECN2. Interacts with SLAMF1. Interacts with RUBCNL/PACER; promoting targeting of UVRAG to autophagosome. Interacts with WNK1. Phosphorylated at Ser-497 by MTOR under basal conditions; increases the interaction with RUBCN implicated in inhibitory effect of RUBCN on PI3KC3 and decreases interaction with RAB7A, and VPS16 and VPS39 (indicative for a class C Vps complex, possibly the HOPS complex).

Its subcellular location is the late endosome. The protein resides in the lysosome. It localises to the cytoplasmic vesicle. It is found in the autophagosome. The protein localises to the early endosome. Its subcellular location is the endoplasmic reticulum. The protein resides in the midbody. It localises to the chromosome. It is found in the centromere. In terms of biological role, versatile protein that is involved in regulation of different cellular pathways implicated in membrane trafficking. Involved in regulation of the COPI-dependent retrograde transport from Golgi and the endoplasmic reticulum by associating with the NRZ complex; the function is dependent on its binding to phosphatidylinositol 3-phosphate (PtdIns(3)P). During autophagy acts as a regulatory subunit of the alternative PI3K complex II (PI3KC3-C2) that mediates formation of phosphatidylinositol 3-phosphate and is believed to be involved in maturation of autophagosomes and endocytosis. Activates lipid kinase activity of PIK3C3. Involved in the regulation of degradative endocytic trafficking and cytokinesis, and in regulation of ATG9A transport from the Golgi to the autophagosome; the functions seems to implicate its association with PI3KC3-C2. Involved in maturation of autophagosomes and degradative endocytic trafficking independently of BECN1 but depending on its association with a class C Vps complex (possibly the HOPS complex); the association is also proposed to promote autophagosome recruitment and activation of Rab7 and endosome-endosome fusion events. Enhances class C Vps complex (possibly HOPS complex) association with a SNARE complex and promotes fusogenic SNARE complex formation during late endocytic membrane fusion. In case of negative-strand RNA virus infection is required for efficient virus entry, promotes endocytic transport of virions and is implicated in a VAMP8-specific fusogenic SNARE complex assembly. Its function is as follows. Involved in maintaining chromosomal stability. Promotes DNA double-strand break (DSB) repair by association with DNA-dependent protein kinase complex DNA-PK and activating it in non-homologous end joining (NHEJ). Required for centrosome stability and proper chromosome segregation. The protein is UV radiation resistance-associated protein (Uvrag) of Mus musculus (Mouse).